The chain runs to 100 residues: U-myrmeciitoxin(01)-Mg7c (100 aa).

A signal peptide spans 1–17 (MKLSYLSLALAIILVLA). The propeptide occupies 18–50 (IVYSPHMEVKALADAEPDAIGFADAFGEADAEP). A glycan (O-linked (GalNAc...) serine) is linked at Ser-85. O-linked (GalNAc...) threonine glycans are attached at residues Thr-94 and Thr-95.

This sequence belongs to the formicidae venom precursor-01 superfamily. Post-translationally, glycosylation is critical to maintaining the aqueous solubility of this protein, but does not directly contribute to its activity. As to expression, expressed by the venom gland.

The protein localises to the secreted. It is found in the target cell membrane. Its function is as follows. Neurotoxin that triggers pain behavior and inflammation in mammals, and is paralytic and lethal to insects. Causes a time-dependent increase in cell leak current. May act by targeting membranes. This chain is U-myrmeciitoxin(01)-Mg7c, found in Myrmecia gulosa (Red bulldog ant).